We begin with the raw amino-acid sequence, 183 residues long: Adenine phosphoribosyltransferase (183 aa).

It belongs to the purine/pyrimidine phosphoribosyltransferase family. Homodimer.

The protein resides in the cytoplasm. It carries out the reaction AMP + diphosphate = 5-phospho-alpha-D-ribose 1-diphosphate + adenine. The protein operates within purine metabolism; AMP biosynthesis via salvage pathway; AMP from adenine: step 1/1. In terms of biological role, catalyzes a salvage reaction resulting in the formation of AMP, that is energically less costly than de novo synthesis. In Erwinia tasmaniensis (strain DSM 17950 / CFBP 7177 / CIP 109463 / NCPPB 4357 / Et1/99), this protein is Adenine phosphoribosyltransferase.